We begin with the raw amino-acid sequence, 356 residues long: Peptide chain release factor 1 (356 aa).

Position 233 is an N5-methylglutamine (Gln-233).

This sequence belongs to the prokaryotic/mitochondrial release factor family. Post-translationally, methylated by PrmC. Methylation increases the termination efficiency of RF1.

It localises to the cytoplasm. Peptide chain release factor 1 directs the termination of translation in response to the peptide chain termination codons UAG and UAA. This chain is Peptide chain release factor 1, found in Symbiobacterium thermophilum (strain DSM 24528 / JCM 14929 / IAM 14863 / T).